Reading from the N-terminus, the 300-residue chain is Ribosomal protein bS6--L-glutamate ligase (300 aa).

The ATP-grasp domain maps to 104-287 (MQLLARQGID…IAGKMIRWIE (184 aa)). ATP-binding positions include Lys-141, 178 to 179 (EY), Asp-187, and 211 to 213 (RSN). 3 residues coordinate Mg(2+): Asp-248, Glu-260, and Asn-262. Mn(2+)-binding residues include Asp-248, Glu-260, and Asn-262.

It belongs to the RimK family. It depends on Mg(2+) as a cofactor. Mn(2+) serves as cofactor.

Functionally, an L-glutamate ligase that catalyzes the ATP-dependent post-translational addition of glutamate residues to the C-terminus of ribosomal protein bS6 (RpsF). Is also able to catalyze the synthesis of poly-alpha-glutamate in vitro, via ATP hydrolysis from unprotected glutamate as substrate. The number of glutamate residues added to either RpsF or to poly-alpha-glutamate changes with pH. This Escherichia coli O139:H28 (strain E24377A / ETEC) protein is Ribosomal protein bS6--L-glutamate ligase.